A 1876-amino-acid chain; its full sequence is MNTDQQPYQGQTDYTQGPGNGQSQEQDYDQYGQPLYPSQADGYYDPNVAAGTEADMYGQQPPNESYDQDYTNGEYYGQPPNMAAQDGENFSDFSSYGPPGTPGYDSYGGQYTASQMSYGEPNSSGTSTPIYGNYDPNAIAMALPNEPYPAWTADSQSPVSIEQIEDIFIDLTNRLGFQRDSMRNMFDHFMVLLDSRSSRMSPDQALLSLHADYIGGDTANYKKWYFAAQLDMDDEIGFRNMSLGKLSRKARKAKKKNKKAMEEANPEDTEETLNKIEGDNSLEAADFRWKAKMNQLSPLERVRHIALYLLCWGEANQVRFTAECLCFIYKCALDYLDSPLCQQRQEPMPEGDFLNRVITPIYHFIRNQVYEIVDGRFVKRERDHNKIVGYDDLNQLFWYPEGIAKIVLEDGTKLIELPLEERYLRLGDVVWDDVFFKTYKETRTWLHLVTNFNRIWVMHISIFWMYFAYNSPTFYTHNYQQLVDNQPLAAYKWASCALGGTVASLIQIVATLCEWSFVPRKWAGAQHLSRRFWFLCIIFGINLGPIIFVFAYDKDTVYSTAAHVVAAVMFFVAVATIIFFSIMPLGGLFTSYMKKSTRRYVASQTFTAAFAPLHGLDRWMSYLVWVTVFAAKYSESYYFLVLSLRDPIRILSTTAMRCTGEYWWGAVLCKVQPKIVLGLVIATDFILFFLDTYLWYIIVNTIFSVGKSFYLGISILTPWRNIFTRLPKRIYSKILATTDMEIKYKPKVLISQVWNAIIISMYREHLLAIDHVQKLLYHQVPSEIEGKRTLRAPTFFVSQDDNNFETEFFPRDSEAERRISFFAQSLSTPIPEPLPVDNMPTFTVLTPHYAERILLSLREIIREDDQFSRVTLLEYLKQLHPVEWECFVKDTKILAEETAAYEGNENEAEKEDALKSQIDDLPFYCIGFKSAAPEYTLRTRIWASLRSQTLYRTISGFMNYSRAIKLLYRVENPEIVQMFGGNAEGLERELEKMARRKFKFLVSMQRLAKFKPHELENAEFLLRAYPDLQIAYLDEEPPLTEGEEPRIYSALIDGHCEILDNGRRRPKFRVQLSGNPILGDGKSDNQNHALIFYRGEYIQLIDANQDNYLEECLKIRSVLAEFEELNVEQVNPYAPGLRYEEQTTNHPVAIVGAREYIFSENSGVLGDVAAGKEQTFGTLFARTLSQIGGKLHYGHPDFINATFMTTRGGVSKAQKGLHLNEDIYAGMNAMLRGGRIKHCEYYQCGKGRDLGFGTILNFTTKIGAGMGEQMLSREYYYLGTQLPVDRFLTFYYAHPGFHLNNLFIQLSLQMFMLTLVNLSSLAHESIMCIYDRNKPKTDVLVPIGCYNFQPAVDWVRRYTLSIFIVFWIAFVPIVVQELIERGLWKATQRFFCHLLSLSPMFEVFAGQIYSSALLSDLAIGGARYISTGRGFATSRIPFSILYSRFAGSAIYMGARSMLMLLFGTVAHWQAPLLWFWASLSSLIFAPFVFNPHQFAWEDFFLDYRDYIRWLSRGNNQYHRNSWIGYVRMSRARITGFKRKLVGDESEKAAGDASRAHRTNLIMAEIIPCAIYAAGCFIAFTFINAQTGVKTTDDDRVNSVLRIIICTLAPIAVNLGVLFFCMGMSCCSGPLFGMCCKKTGSVMAGIAHGVAVIVHIAFFIVMWVLESFNFVRMLIGVVTCIQCQRLIFHCMTALMLTREFKNDHANTAFWTGKWYGKGMGYMAWTQPSRELTAKVIELSEFAADFVLGHVILICQLPLIIIPKIDKFHSIMLFWLKPSRQIRPPIYSLKQTRLRKRMVKKYCSLYFLVLAIFAGCIIGPAVASAKIHKHIGDSLDGVVHNLFQPINTTNNDTGSQMSTYQSHYYTHTPSLKTWSTIK.

Composition is skewed to polar residues over residues 1 to 25 (MNTD…QSQE) and 60 to 71 (QPPNESYDQDYT). The segment at 1–108 (MNTDQQPYQG…PGTPGYDSYG (108 aa)) is disordered. The Cytoplasmic portion of the chain corresponds to 1-454 (MNTDQQPYQG…WLHLVTNFNR (454 aa)). Residue Lys-259 forms a Glycyl lysine isopeptide (Lys-Gly) (interchain with G-Cter in ubiquitin) linkage. A phosphothreonine mark is found at Thr-269 and Thr-272. Residues Lys-275 and Lys-386 each participate in a glycyl lysine isopeptide (Lys-Gly) (interchain with G-Cter in ubiquitin) cross-link. The helical transmembrane segment at 455-475 (IWVMHISIFWMYFAYNSPTFY) threads the bilayer. The Extracellular segment spans residues 476–492 (THNYQQLVDNQPLAAYK). The chain crosses the membrane as a helical span at residues 493–513 (WASCALGGTVASLIQIVATLC). The Cytoplasmic segment spans residues 514-531 (EWSFVPRKWAGAQHLSRR). The helical transmembrane segment at 532–552 (FWFLCIIFGINLGPIIFVFAY) threads the bilayer. The Extracellular portion of the chain corresponds to 553-563 (DKDTVYSTAAH). Residues 564-584 (VVAAVMFFVAVATIIFFSIMP) traverse the membrane as a helical segment. The Cytoplasmic segment spans residues 585-621 (LGGLFTSYMKKSTRRYVASQTFTAAFAPLHGLDRWMS). A helical membrane pass occupies residues 622–642 (YLVWVTVFAAKYSESYYFLVL). Residues 643–678 (SLRDPIRILSTTAMRCTGEYWWGAVLCKVQPKIVLG) are Extracellular-facing. Residues 679-699 (LVIATDFILFFLDTYLWYIIV) traverse the membrane as a helical segment. Residues 700–1358 (NTIFSVGKSF…QPAVDWVRRY (659 aa)) lie on the Cytoplasmic side of the membrane. Residues Lys-910 and Lys-915 each participate in a glycyl lysine isopeptide (Lys-Gly) (interchain with G-Cter in ubiquitin) cross-link. A helical membrane pass occupies residues 1359 to 1379 (TLSIFIVFWIAFVPIVVQELI). At 1380-1444 (ERGLWKATQR…RIPFSILYSR (65 aa)) the chain is on the extracellular side. Residues 1445 to 1465 (FAGSAIYMGARSMLMLLFGTV) form a helical membrane-spanning segment. At 1466–1469 (AHWQ) the chain is on the cytoplasmic side. Residues 1470–1490 (APLLWFWASLSSLIFAPFVFN) form a helical membrane-spanning segment. At 1491–1560 (PHQFAWEDFF…DASRAHRTNL (70 aa)) the chain is on the extracellular side. Residues Lys-1539 and Lys-1547 each participate in a glycyl lysine isopeptide (Lys-Gly) (interchain with G-Cter in ubiquitin) cross-link. A helical transmembrane segment spans residues 1561 to 1581 (IMAEIIPCAIYAAGCFIAFTF). Over 1582-1601 (INAQTGVKTTDDDRVNSVLR) the chain is Cytoplasmic. The chain crosses the membrane as a helical span at residues 1602 to 1622 (IIICTLAPIAVNLGVLFFCMG). The Extracellular portion of the chain corresponds to 1623-1643 (MSCCSGPLFGMCCKKTGSVMA). The helical transmembrane segment at 1644 to 1664 (GIAHGVAVIVHIAFFIVMWVL) threads the bilayer. Residues 1665–1672 (ESFNFVRM) lie on the Cytoplasmic side of the membrane. Residues 1673–1695 (LIGVVTCIQCQRLIFHCMTALML) form a helical membrane-spanning segment. The Extracellular portion of the chain corresponds to 1696–1802 (TREFKNDHAN…RKRMVKKYCS (107 aa)). Residues 1803–1823 (LYFLVLAIFAGCIIGPAVASA) form a helical membrane-spanning segment. The Cytoplasmic portion of the chain corresponds to 1824-1876 (KIHKHIGDSLDGVVHNLFQPINTTNNDTGSQMSTYQSHYYTHTPSLKTWSTIK).

This sequence belongs to the glycosyltransferase 48 family. Component of the 1,3-beta-glucan synthase (GS) complex, composed of two alternate catalytic subunits FKS1 or GSC2, and a regulatory subunit RHO1. Interacts with RHO1, which is a GTP-binding protein.

It localises to the mitochondrion. The protein resides in the cell membrane. The catalysed reaction is [(1-&gt;3)-beta-D-glucosyl](n) + UDP-alpha-D-glucose = [(1-&gt;3)-beta-D-glucosyl](n+1) + UDP + H(+). In terms of biological role, alternate catalytic subunit of the 1,3-beta-glucan synthase (GS) complex. Synthesizes 1,3-beta-glucan, a major structural component of the yeast cell wall. Involved in cell wall synthesis, maintenance and remodeling. This Saccharomyces cerevisiae (strain ATCC 204508 / S288c) (Baker's yeast) protein is 1,3-beta-glucan synthase component FKS1 (FKS1).